The following is a 437-amino-acid chain: MLITKTAFLAFLLSSVPLAHGAGGNSSSPDARGRRCVVRSSNGTADDSPEVSRVFAQCATNSVIVFQEGVDYNIFQPIKATNLSNVEIQMHGNLHLPQNISAVRDIVNAGTSTWFTLEGPRVDWTGPEDVNNGWIKSYGQAWWDANPPNGTGISGRPHLMSYKTSQATIKYFRSGKPIAWNMKLHGEDIAVSHAIVDASSTGSFPFNTDAFDVQGTNIRISDSIMYNGDDAIAVGSDSHNIVFERNTIGYQSHGMSIGSLGKDASAFANITNLRFEDVTVIDALYAARFKSWTGGQGLVKNVTWKNIRVYNVTFPIFVTQSYYDQSVSRDGVDTESSVMMEDFTWEDFSGSINSYQPGDGSCATDPCWYNAGLPNLKHTEALVIECNTDKSCKNFVTKNIQLYPQVLEPASVICMKATAELNPNLGFNCSNGTFTSA.

The signal sequence occupies residues 1–21 (MLITKTAFLAFLLSSVPLAHG). 5 N-linked (GlcNAc...) asparagine glycosylation sites follow: N25, N42, N82, N99, and N149. 2 PbH1 repeats span residues 215-236 (GTNI…AVGS) and 238-259 (SHNI…SIGS). D229 serves as the catalytic Proton donor. The active site involves H253. N269 carries N-linked (GlcNAc...) asparagine glycosylation. 2 PbH1 repeats span residues 270–291 (ITNL…RFKS) and 299–320 (VKNV…FVTQ). N-linked (GlcNAc...) asparagine glycosylation is found at N301 and N311. C386 and C392 are joined by a disulfide. 2 N-linked (GlcNAc...) asparagine glycosylation sites follow: N428 and N431.

Belongs to the glycosyl hydrolase 28 family.

It is found in the secreted. The enzyme catalyses [(1-&gt;4)-alpha-D-galacturonosyl](n) + H2O = alpha-D-galacturonate + [(1-&gt;4)-alpha-D-galacturonosyl](n-1). In terms of biological role, specific in hydrolyzing the terminal glycosidic bond of polygalacturonic acid and oligogalacturonates. The sequence is that of Probable exopolygalacturonase C (pgxC) from Aspergillus flavus (strain ATCC 200026 / FGSC A1120 / IAM 13836 / NRRL 3357 / JCM 12722 / SRRC 167).